The chain runs to 144 residues: Small polypeptide DEVIL 15 (144 aa).

An N-linked (GlcNAc...) asparagine glycan is attached at Asn-8. Positions 22 to 63 (SSSSKPFFTRSFSTKTSSSPSSKSHFTRSFSTKPSSSSSSSD) are disordered. Residues 104 to 120 (ILSKKGASVTGKCFKVA) form a helical membrane-spanning segment. The interval 111–142 (SVTGKCFKVAKEHKSRFYIIKRCVLMLVCWHK) is required for DVL/RTFL small polypeptide activity.

This sequence belongs to the DVL/RTFL small polypeptides family.

The protein localises to the cell membrane. Functionally, small polypeptide acting as a regulatory molecule which coordinates cellular responses required for differentiation, growth and development, probably by restricting polar cell proliferation in lateral organs and coordinating socket cell recruitment and differentiation at trichome sites. This chain is Small polypeptide DEVIL 15, found in Arabidopsis thaliana (Mouse-ear cress).